We begin with the raw amino-acid sequence, 207 residues long: Urease accessory protein UreG (207 aa).

12–19 (GPVGAGKT) contributes to the GTP binding site.

The protein belongs to the SIMIBI class G3E GTPase family. UreG subfamily. As to quaternary structure, homodimer. UreD, UreF and UreG form a complex that acts as a GTP-hydrolysis-dependent molecular chaperone, activating the urease apoprotein by helping to assemble the nickel containing metallocenter of UreC. The UreE protein probably delivers the nickel.

The protein localises to the cytoplasm. Functionally, facilitates the functional incorporation of the urease nickel metallocenter. This process requires GTP hydrolysis, probably effectuated by UreG. This Cereibacter sphaeroides (strain ATCC 17025 / ATH 2.4.3) (Rhodobacter sphaeroides) protein is Urease accessory protein UreG.